A 98-amino-acid chain; its full sequence is NADH-ubiquinone oxidoreductase chain 4L (98 aa).

A run of 3 helical transmembrane segments spans residues 1-21, 29-49, and 61-81; these read MTPTYMNIMLAFTISLLGMLI, SLLCLEGMMMSLFIMTTLIAL, and IILLVFAACEAAVGLALLVSI.

This sequence belongs to the complex I subunit 4L family. Core subunit of respiratory chain NADH dehydrogenase (Complex I) which is composed of 45 different subunits.

It localises to the mitochondrion inner membrane. It catalyses the reaction a ubiquinone + NADH + 5 H(+)(in) = a ubiquinol + NAD(+) + 4 H(+)(out). Core subunit of the mitochondrial membrane respiratory chain NADH dehydrogenase (Complex I) which catalyzes electron transfer from NADH through the respiratory chain, using ubiquinone as an electron acceptor. Part of the enzyme membrane arm which is embedded in the lipid bilayer and involved in proton translocation. This chain is NADH-ubiquinone oxidoreductase chain 4L (MT-ND4L), found in Macaca maura (Moor macaque).